The sequence spans 333 residues: 4-hydroxy-3-methylbut-2-enyl diphosphate reductase (333 aa).

Residue cysteine 20 coordinates [4Fe-4S] cluster. The (2E)-4-hydroxy-3-methylbut-2-enyl diphosphate site is built by histidine 49 and histidine 82. The dimethylallyl diphosphate site is built by histidine 49 and histidine 82. Residues histidine 49 and histidine 82 each contribute to the isopentenyl diphosphate site. Cysteine 104 serves as a coordination point for [4Fe-4S] cluster. Histidine 132 provides a ligand contact to (2E)-4-hydroxy-3-methylbut-2-enyl diphosphate. Residue histidine 132 participates in dimethylallyl diphosphate binding. Histidine 132 serves as a coordination point for isopentenyl diphosphate. Catalysis depends on glutamate 134, which acts as the Proton donor. Threonine 172 contributes to the (2E)-4-hydroxy-3-methylbut-2-enyl diphosphate binding site. Cysteine 202 contributes to the [4Fe-4S] cluster binding site. (2E)-4-hydroxy-3-methylbut-2-enyl diphosphate contacts are provided by serine 230, serine 231, asparagine 232, and serine 274. Dimethylallyl diphosphate contacts are provided by serine 230, serine 231, asparagine 232, and serine 274. Isopentenyl diphosphate contacts are provided by serine 230, serine 231, asparagine 232, and serine 274.

It belongs to the IspH family. [4Fe-4S] cluster is required as a cofactor.

It carries out the reaction isopentenyl diphosphate + 2 oxidized [2Fe-2S]-[ferredoxin] + H2O = (2E)-4-hydroxy-3-methylbut-2-enyl diphosphate + 2 reduced [2Fe-2S]-[ferredoxin] + 2 H(+). The catalysed reaction is dimethylallyl diphosphate + 2 oxidized [2Fe-2S]-[ferredoxin] + H2O = (2E)-4-hydroxy-3-methylbut-2-enyl diphosphate + 2 reduced [2Fe-2S]-[ferredoxin] + 2 H(+). The protein operates within isoprenoid biosynthesis; dimethylallyl diphosphate biosynthesis; dimethylallyl diphosphate from (2E)-4-hydroxy-3-methylbutenyl diphosphate: step 1/1. It functions in the pathway isoprenoid biosynthesis; isopentenyl diphosphate biosynthesis via DXP pathway; isopentenyl diphosphate from 1-deoxy-D-xylulose 5-phosphate: step 6/6. Catalyzes the conversion of 1-hydroxy-2-methyl-2-(E)-butenyl 4-diphosphate (HMBPP) into a mixture of isopentenyl diphosphate (IPP) and dimethylallyl diphosphate (DMAPP). Acts in the terminal step of the DOXP/MEP pathway for isoprenoid precursor biosynthesis. This is 4-hydroxy-3-methylbut-2-enyl diphosphate reductase from Polaromonas sp. (strain JS666 / ATCC BAA-500).